Reading from the N-terminus, the 235-residue chain is Transcriptional regulatory protein MalR (235 aa).

The Response regulatory domain maps to 3 to 119 (NVLIVEDDPM…RFQTALSDYR (117 aa)). D54 carries the 4-aspartylphosphate modification. The H-T-H motif DNA-binding region spans 178–197 (TEDLAKHTEISQVSIRKYLK).

In terms of processing, phosphorylated and activated by MalK.

The protein localises to the cytoplasm. Functionally, member of a two-component regulatory system MalK/MalR. Activates transcription of maeA, maeN and yflS in presence of malate by binding to their promoter region. The polypeptide is Transcriptional regulatory protein MalR (malR) (Bacillus subtilis (strain 168)).